A 170-amino-acid chain; its full sequence is Crossover junction endodeoxyribonuclease RuvC (170 aa).

Residues aspartate 11, glutamate 71, and aspartate 143 contribute to the active site. The Mg(2+) site is built by aspartate 11, glutamate 71, and aspartate 143.

The protein belongs to the RuvC family. In terms of assembly, homodimer which binds Holliday junction (HJ) DNA. The HJ becomes 2-fold symmetrical on binding to RuvC with unstacked arms; it has a different conformation from HJ DNA in complex with RuvA. In the full resolvosome a probable DNA-RuvA(4)-RuvB(12)-RuvC(2) complex forms which resolves the HJ. It depends on Mg(2+) as a cofactor.

The protein resides in the cytoplasm. The catalysed reaction is Endonucleolytic cleavage at a junction such as a reciprocal single-stranded crossover between two homologous DNA duplexes (Holliday junction).. In terms of biological role, the RuvA-RuvB-RuvC complex processes Holliday junction (HJ) DNA during genetic recombination and DNA repair. Endonuclease that resolves HJ intermediates. Cleaves cruciform DNA by making single-stranded nicks across the HJ at symmetrical positions within the homologous arms, yielding a 5'-phosphate and a 3'-hydroxyl group; requires a central core of homology in the junction. The consensus cleavage sequence is 5'-(A/T)TT(C/G)-3'. Cleavage occurs on the 3'-side of the TT dinucleotide at the point of strand exchange. HJ branch migration catalyzed by RuvA-RuvB allows RuvC to scan DNA until it finds its consensus sequence, where it cleaves and resolves the cruciform DNA. The polypeptide is Crossover junction endodeoxyribonuclease RuvC (Rhizobium meliloti (strain 1021) (Ensifer meliloti)).